The following is a 159-amino-acid chain: Small ribosomal subunit protein uS17y (159 aa).

The protein belongs to the universal ribosomal protein uS17 family.

It is found in the cytoplasm. The chain is Small ribosomal subunit protein uS17y (RPS11B) from Arabidopsis thaliana (Mouse-ear cress).